The following is a 238-amino-acid chain: Protein lifeguard 4 (238 aa).

The Cytoplasmic segment spans residues 1-38; that stretch reads MADTDPGYPRSSIEDDFNYGSCVASASVHIRMAFLRKV. A helical membrane pass occupies residues 39-59; that stretch reads YSILSLQVLLTTVTSALFLYF. Residues 60–68 lie on the Lumenal side of the membrane; it reads QALRTFVHE. A helical transmembrane segment spans residues 69-89; sequence SPALIVVFALGSLGLIFALTL. At 90 to 97 the chain is on the cytoplasmic side; the sequence is HRHTHPLN. Residues 98–118 form a helical membrane-spanning segment; sequence LYLLFAFTLSESLAVAAVVTF. Residues 119–120 are Lumenal-facing; sequence YD. The chain crosses the membrane as a helical span at residues 121–141; sequence VYLVLQAFIMTTAVFLGLTAY. At 142–151 the chain is on the cytoplasmic side; sequence TLQSKRDFTK. A helical transmembrane segment spans residues 152 to 172; the sequence is FGAGLFAGLWILCLAGFLKLF. At 173-175 the chain is on the lumenal side; the sequence is FYS. A helical transmembrane segment spans residues 176-196; the sequence is ETMELVLASLGALLFCGFIIY. Residues 197-208 lie on the Cytoplasmic side of the membrane; that stretch reads DTHSLMHRLSPE. An intramembrane region (helical) is located at residues 209–229; that stretch reads EYVIAAISLYMDIINLFLHLL. At 230 to 238 the chain is on the cytoplasmic side; that stretch reads KFLEAVNKK.

This sequence belongs to the BI1 family. LFG subfamily. Interacts with ITPR3.

The protein resides in the golgi apparatus membrane. Anti-apoptotic protein which can inhibit apoptosis induced by intrinsic and extrinsic apoptotic stimuli. Can modulate both capacitative Ca2+ entry and inositol 1,4,5-trisphosphate (IP3)-mediated Ca2+ release. In Mus musculus (Mouse), this protein is Protein lifeguard 4 (Tmbim4).